Here is a 422-residue protein sequence, read N- to C-terminus: Lactoyl-CoA dehydratase subunit alpha (422 aa).

The protein belongs to the FldB/FldC dehydratase alpha/beta subunit family. In terms of assembly, heterodimer of an alpha (LcdA) and a beta (LcdB) subunit. [4Fe-4S] cluster serves as cofactor. FMN is required as a cofactor. Requires riboflavin as cofactor. The cofactor is Mg(2+).

The catalysed reaction is (R)-lactoyl-CoA = acryloyl-CoA + H2O. It catalyses the reaction (2R)-hydroxybutanoyl-CoA = (2E)-butenoyl-CoA + H2O. Activated by the LcdC protein. Functionally, involved in the acrylate pathway for the conversion of D-lactic acid to propionic acid. Catalyzes the reversible dehydration of Lactoyl-CoA and 2-hydroxybutyroyl-CoA to acryloyl-CoA and crotonyl-CoA, respectively. This is Lactoyl-CoA dehydratase subunit alpha (lcdA) from Anaerotignum propionicum (Clostridium propionicum).